A 145-amino-acid chain; its full sequence is Putative sterol 14-demethylase-like protein (145 aa).

Residues 5–25 (YYTLLKTSVAIIIVFVVAKLI) traverse the membrane as a helical segment.

The protein belongs to the cytochrome P450 family. In terms of tissue distribution, expressed specifically in roots.

The protein resides in the membrane. The chain is Putative sterol 14-demethylase-like protein (CYP51G2) from Arabidopsis thaliana (Mouse-ear cress).